The chain runs to 310 residues: MKITVIGAGNVGATAALRIAEKQLAKEVVLIDIVEGIPQGKALDMYESGAVALFDTTVLGSNDYKDSADSDIVLITAGLARKPGMSREDLLKINATIIRDVTTEVMKYSANPIIIMVSNPLDVMTFVAWKASGLPKERVIGMAGVLDTARYKNFIAEALDVSMQDISAMVLGGHGDSMVPIVNYTNVAGIPLTELLPQDKIDALVERTRNGGIEIVNYLKTGSAFYAPAASAVEMIEGITKDRKRIIPCTTLLEGQYGIESVFCGVPVKLGKNGVEQILEINLTASELEALRKSAALVEENCKNLATLLG.

NAD(+)-binding positions include 7-12 and D32; that span reads GAGNVG. The substrate site is built by R81 and R87. NAD(+) is bound by residues N94 and 117–119; that span reads VSN. Substrate contacts are provided by N119 and R150. The active-site Proton acceptor is H174.

This sequence belongs to the LDH/MDH superfamily. MDH type 3 family.

It catalyses the reaction (S)-malate + NAD(+) = oxaloacetate + NADH + H(+). Functionally, catalyzes the reversible oxidation of malate to oxaloacetate. The protein is Malate dehydrogenase of Pelodictyon phaeoclathratiforme (strain DSM 5477 / BU-1).